The sequence spans 252 residues: Imidazole glycerol phosphate synthase subunit HisF (252 aa).

Catalysis depends on residues Asp11 and Asp130.

Belongs to the HisA/HisF family. As to quaternary structure, heterodimer of HisH and HisF.

It is found in the cytoplasm. It carries out the reaction 5-[(5-phospho-1-deoxy-D-ribulos-1-ylimino)methylamino]-1-(5-phospho-beta-D-ribosyl)imidazole-4-carboxamide + L-glutamine = D-erythro-1-(imidazol-4-yl)glycerol 3-phosphate + 5-amino-1-(5-phospho-beta-D-ribosyl)imidazole-4-carboxamide + L-glutamate + H(+). It functions in the pathway amino-acid biosynthesis; L-histidine biosynthesis; L-histidine from 5-phospho-alpha-D-ribose 1-diphosphate: step 5/9. Functionally, IGPS catalyzes the conversion of PRFAR and glutamine to IGP, AICAR and glutamate. The HisF subunit catalyzes the cyclization activity that produces IGP and AICAR from PRFAR using the ammonia provided by the HisH subunit. This chain is Imidazole glycerol phosphate synthase subunit HisF, found in Bacillus cereus (strain ZK / E33L).